The following is a 226-amino-acid chain: Enolase-phosphatase E1 (226 aa).

It belongs to the HAD-like hydrolase superfamily. MasA/MtnC family. In terms of assembly, monomer. Mg(2+) is required as a cofactor.

It carries out the reaction 5-methylsulfanyl-2,3-dioxopentyl phosphate + H2O = 1,2-dihydroxy-5-(methylsulfanyl)pent-1-en-3-one + phosphate. It functions in the pathway amino-acid biosynthesis; L-methionine biosynthesis via salvage pathway; L-methionine from S-methyl-5-thio-alpha-D-ribose 1-phosphate: step 3/6. The protein operates within amino-acid biosynthesis; L-methionine biosynthesis via salvage pathway; L-methionine from S-methyl-5-thio-alpha-D-ribose 1-phosphate: step 4/6. Functionally, bifunctional enzyme that catalyzes the enolization of 2,3-diketo-5-methylthiopentyl-1-phosphate (DK-MTP-1-P) into the intermediate 2-hydroxy-3-keto-5-methylthiopentenyl-1-phosphate (HK-MTPenyl-1-P), which is then dephosphorylated to form the acireductone 1,2-dihydroxy-3-keto-5-methylthiopentene (DHK-MTPene). The polypeptide is Enolase-phosphatase E1 (Shewanella putrefaciens (strain CN-32 / ATCC BAA-453)).